The sequence spans 466 residues: ATP synthase subunit beta (466 aa).

Position 153-160 (153-160 (GGAGVGKT)) interacts with ATP.

This sequence belongs to the ATPase alpha/beta chains family. As to quaternary structure, F-type ATPases have 2 components, CF(1) - the catalytic core - and CF(0) - the membrane proton channel. CF(1) has five subunits: alpha(3), beta(3), gamma(1), delta(1), epsilon(1). CF(0) has three main subunits: a(1), b(2) and c(9-12). The alpha and beta chains form an alternating ring which encloses part of the gamma chain. CF(1) is attached to CF(0) by a central stalk formed by the gamma and epsilon chains, while a peripheral stalk is formed by the delta and b chains.

It is found in the cell membrane. The enzyme catalyses ATP + H2O + 4 H(+)(in) = ADP + phosphate + 5 H(+)(out). In terms of biological role, produces ATP from ADP in the presence of a proton gradient across the membrane. The catalytic sites are hosted primarily by the beta subunits. This Leuconostoc mesenteroides subsp. mesenteroides (strain ATCC 8293 / DSM 20343 / BCRC 11652 / CCM 1803 / JCM 6124 / NCDO 523 / NBRC 100496 / NCIMB 8023 / NCTC 12954 / NRRL B-1118 / 37Y) protein is ATP synthase subunit beta.